Consider the following 320-residue polypeptide: Cytochrome c biogenesis protein CcsA (320 aa).

A run of 8 helical transmembrane segments spans residues 13-33, 46-66, 73-93, 102-122, 147-167, 226-246, 259-274, and 289-309; these read ISFS…FLLV, GMIV…IYSG, LYES…VSYL, LSAI…SGLL, MVLG…LLVI, IISL…VWAN, ETWA…IYFH, and VASM…LLGI.

The protein belongs to the CcmF/CycK/Ccl1/NrfE/CcsA family. As to quaternary structure, may interact with Ccs1.

Its subcellular location is the plastid. The protein resides in the chloroplast thylakoid membrane. Its function is as follows. Required during biogenesis of c-type cytochromes (cytochrome c6 and cytochrome f) at the step of heme attachment. This is Cytochrome c biogenesis protein CcsA from Gossypium hirsutum (Upland cotton).